The following is a 1220-amino-acid chain: Plasma membrane calcium-transporting ATPase 1 (1220 aa).

Glycine 2 is modified (N-acetylglycine). The Cytoplasmic portion of the chain corresponds to 2-105 (GDMANNSVVY…KTFLQLVWEA (104 aa)). Serine 8 and serine 17 each carry phosphoserine. A helical membrane pass occupies residues 106–126 (LQDVTLIILEIAAIVSLGLSF). Residues 127-154 (YQPPEGDNALCGEVSVGEEEGEGETGWI) lie on the Extracellular side of the membrane. The chain crosses the membrane as a helical span at residues 155-175 (EGAAILLSVVCVVLVTAFNDW). Over 176-366 (SKEKQFRGLQ…KEKSVLQGKL (191 aa)) the chain is Cytoplasmic. A disordered region spans residues 297-356 (EEEKKDEKKKEKKNKKQDGAIENRNKAKAQDGEPMEMQPLKSEEGGDGDEKDKKKANLPK). Composition is skewed to basic and acidic residues over residues 312 to 327 (KQDG…KAQD) and 337 to 356 (KSEE…NLPK). Serine 338 is modified (phosphoserine). A helical membrane pass occupies residues 367–386 (TKLAVQIGKAGLLMSAITVI). Residues 387–418 (ILVLYFLIDTFWVQKRPWLAECTPIYIQYFVK) lie on the Extracellular side of the membrane. Residues 419–439 (FFIIGVTVLVVAVPEGLPLPV) traverse the membrane as a helical segment. Residues 440 to 855 (TISLAYSVNE…RNVYDSISKF (416 aa)) are Cytoplasmic-facing. The active-site 4-aspartylphosphate intermediate is aspartate 475. The Mg(2+) site is built by aspartate 475, threonine 477, and aspartate 797. Residues 856–876 (LQFQLTVNVVAVIVAFTGACI) traverse the membrane as a helical segment. Residues 877 to 882 (TQDSPL) lie on the Extracellular side of the membrane. The helical transmembrane segment at 883 to 903 (KAVQMLWVNLIMDTLASLALA) threads the bilayer. At 904-927 (TEPPTESLLLGKPYGRNKPLISRT) the chain is on the cytoplasmic side. A helical transmembrane segment spans residues 928–948 (MMKNILGHAFYQLVVVFTLLL). Over 949-971 (AGEKFFDIDSGRNAPLHAPPSEH) the chain is Extracellular. The helical transmembrane segment at 972–991 (YTIVFNIFVLMQLFNEINAR) threads the bilayer. Over 992-1005 (KIHGERNVFEGIFN) the chain is Cytoplasmic. The helical transmembrane segment at 1006–1027 (NAIFCTIVLGTFVVQIIIVQFA) threads the bilayer. Residues 1028-1039 (GKPFSCSELSVE) lie on the Extracellular side of the membrane. A helical membrane pass occupies residues 1040–1060 (QWLWSIFLGMGTLLWGQLIST). The Cytoplasmic portion of the chain corresponds to 1061–1220 (IPTSRLKFQK…SPLHSLETSL (160 aa)). The segment at 1100–1117 (LRRWQILWFRGLNRIQTQ) is calmodulin-binding subdomain A. At threonine 1116 the chain carries Phosphothreonine; by PKC. Residues 1118–1220 (IRVVNAFRSS…SPLHSLETSL (103 aa)) are required for basolateral membrane targeting. Phosphoserine occurs at positions 1140 and 1155. The disordered stretch occupies residues 1160–1220 (PLIDDTDAED…SPLHSLETSL (61 aa)). Threonine 1165 bears the Phosphothreonine mark. Serine 1177 bears the Phosphoserine; by PKA mark. 2 positions are modified to phosphoserine: serine 1178 and serine 1182. The segment covering 1200–1220 (MNKSATSSSPGSPLHSLETSL) has biased composition (polar residues).

It belongs to the cation transport ATPase (P-type) (TC 3.A.3) family. Type IIB subfamily. Monomer. Dimer. Oligomer. Calmodulin binding. Interacts with PDZD11. Interacts with SLC35G1 and STIM1. Interacts with YWHAE; interacts with the monomeric and dimeric forms of the YWHAE but prefer the monomer form; this interaction inhibits calcium-transporting ATPase activity. Interacts with NPTN; this interaction stabilizes ATP2B1 and increases ATPase activity; this interaction controls T cell calcium homeostasis following T cell activation. Interacts with EPB41; regulates small intestinal calcium absorption through regulation of membrane expression of ATP2B1. Isoform B is ubiquitously expressed and is the most predominant isoform. Isoform C is expressed at much lower levels in all tissues tested, but liver, while isoform A is found only in aorta, brain and stomach.

It is found in the cell membrane. The protein localises to the basolateral cell membrane. The protein resides in the synapse. Its subcellular location is the presynaptic cell membrane. It localises to the cytoplasmic vesicle. It is found in the secretory vesicle. The protein localises to the synaptic vesicle membrane. It carries out the reaction Ca(2+)(in) + ATP + H2O = Ca(2+)(out) + ADP + phosphate + H(+). Functionally, catalyzes the hydrolysis of ATP coupled with the transport of calcium from the cytoplasm to the extracellular space thereby maintaining intracellular calcium homeostasis. Plays a role in blood pressure regulation through regulation of intracellular calcium concentration and nitric oxide production leading to regulation of vascular smooth muscle cells vasoconstriction. Positively regulates bone mineralization through absorption of calcium from the intestine. Plays dual roles in osteoclast differentiation and survival by regulating RANKL-induced calcium oscillations in preosteoclasts and mediating calcium extrusion in mature osteoclasts. Regulates insulin sensitivity through calcium/calmodulin signaling pathway by regulating AKT1 activation and NOS3 activation in endothelial cells. May play a role in synaptic transmission by modulating calcium and proton dynamics at the synaptic vesicles. The protein is Plasma membrane calcium-transporting ATPase 1 of Oryctolagus cuniculus (Rabbit).